The chain runs to 245 residues: Flavin-dependent thymidylate synthase (245 aa).

Residues I5–K210 enclose the ThyX domain. Residues S59, R83–R85, and Q91 each bind FAD. Residues Q80–R83, Q91–R95, and R149 each bind dUMP. The ThyX motif signature appears at R83–S93. FAD contacts are provided by residues N165–R167 and H171. R176 contacts dUMP. R176 serves as the catalytic Involved in ionization of N3 of dUMP, leading to its activation.

It belongs to the thymidylate synthase ThyX family. Homotetramer. It depends on FAD as a cofactor.

It catalyses the reaction dUMP + (6R)-5,10-methylene-5,6,7,8-tetrahydrofolate + NADPH + H(+) = dTMP + (6S)-5,6,7,8-tetrahydrofolate + NADP(+). Its pathway is pyrimidine metabolism; dTTP biosynthesis. In terms of biological role, catalyzes the reductive methylation of 2'-deoxyuridine-5'-monophosphate (dUMP) to 2'-deoxythymidine-5'-monophosphate (dTMP) while utilizing 5,10-methylenetetrahydrofolate (mTHF) as the methyl donor, and NADPH and FADH(2) as the reductant. This is Flavin-dependent thymidylate synthase from Thermococcus kodakarensis (strain ATCC BAA-918 / JCM 12380 / KOD1) (Pyrococcus kodakaraensis (strain KOD1)).